A 623-amino-acid polypeptide reads, in one-letter code: Chaperone protein HtpG (623 aa).

Residues Met-1–Arg-326 are a; substrate-binding. A b region spans residues Glu-327–Lys-543. Residues Met-544–Gly-623 are c.

The protein belongs to the heat shock protein 90 family. Homodimer.

The protein localises to the cytoplasm. Functionally, molecular chaperone. Has ATPase activity. This is Chaperone protein HtpG from Paramagnetospirillum magneticum (strain ATCC 700264 / AMB-1) (Magnetospirillum magneticum).